We begin with the raw amino-acid sequence, 353 residues long: MTIAIGKSSKEPKGLFDSMDDWLRRDRFVFVGWSGLLLFPCAYFALGGWFTGTTFVTSWYTHGLASSYLEGCNFLTAAVSTPANSLAHSLLLLWGPEAQGDFTRWCQLGGLWTFVALHGAFGLIGFMLRQFELARSVQLRPYNAIAFSGPIAVFVSVFLIYPLGQSGWFFAPSFGVAAIFRFILFFQGFHNWTLNPFHMMGVAGVLGAALLCAIHGATVENTLFEDGDGANTFRAFNPTQSEETYSMVTANRFWSQIFGVAFSNKRWLHFFMLFVPVTGLWMSAIGVVGLALNLRAYDFVSQEIRAAEDPEFETFYTKNILLNEGIRAWMAAQDQPHENLVFPEEVLPRGNAL.

Thr-2 bears the N-acetylthreonine mark. Thr-2 is modified (phosphothreonine). Residues 41 to 61 (CAYFALGGWFTGTTFVTSWYT) form a helical membrane-spanning segment. Chlorophyll a is bound at residue His-118. The helical transmembrane segment at 125-141 (GFMLRQFELARSVQLRP) threads the bilayer. Residues Gln-130 and Asn-143 each contribute to the pheophytin a site. Residues 153–166 (VFVSVFLIYPLGQS) form a helical membrane-spanning segment. Chlorophyll a is bound at residue His-198. A helical transmembrane segment spans residues 208–228 (AALLCAIHGATVENTLFEDGD). A plastoquinone is bound by residues His-215 and Phe-262. A Fe cation-binding site is contributed by His-215. His-269 lines the Fe cation pocket. The chain crosses the membrane as a helical span at residues 279–295 (GLWMSAIGVVGLALNLR).

This sequence belongs to the reaction center PufL/M/PsbA/D family. As to quaternary structure, PSII is composed of 1 copy each of membrane proteins PsbA, PsbB, PsbC, PsbD, PsbE, PsbF, PsbH, PsbI, PsbJ, PsbK, PsbL, PsbM, PsbT, PsbX, PsbY, PsbZ, Psb30/Ycf12, at least 3 peripheral proteins of the oxygen-evolving complex and a large number of cofactors. It forms dimeric complexes. It depends on The D1/D2 heterodimer binds P680, chlorophylls that are the primary electron donor of PSII, and subsequent electron acceptors. It shares a non-heme iron and each subunit binds pheophytin, quinone, additional chlorophylls, carotenoids and lipids. There is also a Cl(-1) ion associated with D1 and D2, which is required for oxygen evolution. The PSII complex binds additional chlorophylls, carotenoids and specific lipids. as a cofactor. Post-translationally, phosphorylated on threonine residue(s); phosphorylation increases with increasing light levels.

It is found in the plastid. It localises to the chloroplast thylakoid membrane. The catalysed reaction is 2 a plastoquinone + 4 hnu + 2 H2O = 2 a plastoquinol + O2. In terms of biological role, photosystem II (PSII) is a light-driven water:plastoquinone oxidoreductase that uses light energy to abstract electrons from H(2)O, generating O(2) and a proton gradient subsequently used for ATP formation. It consists of a core antenna complex that captures photons, and an electron transfer chain that converts photonic excitation into a charge separation. The D1/D2 (PsbA/PsbD) reaction center heterodimer binds P680, the primary electron donor of PSII as well as several subsequent electron acceptors. D2 is needed for assembly of a stable PSII complex. In Marchantia polymorpha (Common liverwort), this protein is Photosystem II D2 protein.